The sequence spans 257 residues: MTESSLDLQESGWEELRREARKIEGDLDVKLSSYAKLGARFTQGDTDLVMNYEKVLKCVLVSGYVDTGSPTVGSGRSWKSMEMEIQSLLEKLLDINDSMSRCAASAAPTTSVTQKLARHRDILHEYTQEFRRIKGNINSLREHAELLSSVRDDISEYKASGSMSPGVQVLRERASIHGSISHIDDVIGQAQATRAVLGSQRSLFSDVQGKVKNLGDKFPVIRGLLGSIKRKRSRDTLILSAVIAACTLFLIIYWLSK.

Residues 1 to 235 are Cytoplasmic-facing; sequence MTESSLDLQE…GSIKRKRSRD (235 aa). N51 carries the post-translational modification Phosphoserine. Positions 113-147 form a coiled coil; the sequence is TQKLARHRDILHEYTQEFRRIKGNINSLREHAELL. Residues 236–256 traverse the membrane as a helical; Anchor for type IV membrane protein segment; the sequence is TLILSAVIAACTLFLIIYWLS. K257 is a topological domain (vesicular).

Belongs to the GOSR1 family. As to quaternary structure, component of several multiprotein Golgi SNARE complexes.

It localises to the golgi apparatus membrane. The protein localises to the endoplasmic reticulum membrane. In terms of biological role, involved in transport from the ER to the Golgi apparatus as well as in intra-Golgi transport. It belongs to a super-family of proteins called t-SNAREs or soluble NSF (N-ethylmaleimide-sensitive factor) attachment protein receptor. The chain is Golgi SNAP receptor complex member 1-2 (GOS12) from Arabidopsis thaliana (Mouse-ear cress).